The primary structure comprises 391 residues: Squalene synthase 8 (391 aa).

The protein belongs to the phytoene/squalene synthase family. Requires Mg(2+) as cofactor. The cofactor is Mn(2+).

It localises to the endoplasmic reticulum. It carries out the reaction 2 (2E,6E)-farnesyl diphosphate + NADH + H(+) = squalene + 2 diphosphate + NAD(+). The catalysed reaction is 2 (2E,6E)-farnesyl diphosphate + NADPH + H(+) = squalene + 2 diphosphate + NADP(+). It functions in the pathway terpene metabolism; lanosterol biosynthesis; lanosterol from farnesyl diphosphate: step 1/3. Its function is as follows. Component of the triterpene saponins (e.g. ginsenosides or panaxosides) and phytosterols biosynthetic pathways. Catalyzes the biosynthesis of squalene. This is Squalene synthase 8 from Panax ginseng (Korean ginseng).